A 420-amino-acid chain; its full sequence is Transcriptional adapter 2-beta (420 aa).

The ZZ-type zinc-finger motif lies at L4–F59. Zn(2+) is bound by residues C9, C12, C23, C26, C32, C35, H45, and H49. The 54-residue stretch at E65–N118 folds into the SANT domain. The interval E303–D333 is disordered.

The protein resides in the nucleus. In terms of biological role, transcriptional coactivator. This is Transcriptional adapter 2-beta (tada2b) from Xenopus laevis (African clawed frog).